A 1481-amino-acid chain; its full sequence is Cystic fibrosis transmembrane conductance regulator (1481 aa).

The Cytoplasmic portion of the chain corresponds to 1 to 77 (MQRSPLEKAS…KLINALRRCF (77 aa)). Residues 78–98 (FWRFMFYGILLYLGEVTKAVQ) form a helical membrane-spanning segment. The region spanning 81-365 (FMFYGILLYL…WAVQTWYDSL (285 aa)) is the ABC transmembrane type-1 1 domain. Over 99–122 (PLLLGRIIASYDPDNKEERSIAIY) the chain is Extracellular. The helical transmembrane segment at 123–146 (LGIGLCLLFIVRTLLLHPAIFGLH) threads the bilayer. Topologically, residues 147 to 195 (HIGMQMRIAMFSLIYKKTLKLSSRVLDKISIGQLVSLLSNNLNKFDEGL) are cytoplasmic. A helical membrane pass occupies residues 196-216 (ALAHFVWIVPLQVALLMGLIW). Over 217–222 (ELLQAS) the chain is Extracellular. A helical transmembrane segment spans residues 223-243 (AFCGLGFLIVLALFQAGLGRM). Residues 244-298 (MMKYRDQRAGKINERLVITSEMIENIQSVKAYCWEEAMEKMIENLRQTELKLTRK) lie on the Cytoplasmic side of the membrane. The helical transmembrane segment at 299–319 (AAYVRYFNSSAFFFSGFFVVF) threads the bilayer. The Extracellular segment spans residues 320 to 339 (LSVLPYALIKGIVLRKIFTT). Residues 340 to 358 (ISFCIVLRMAVTRQFPWAV) traverse the membrane as a helical segment. Residues 359-858 (QTWYDSLGAI…YLRYITVHKS (500 aa)) lie on the Cytoplasmic side of the membrane. ATP contacts are provided by residues Trp401, Ser434, 458–465 (GSTGAGKT), and Gln493. Positions 423 to 646 (NDDDSLFFSN…RPDFSSKLMG (224 aa)) constitute an ABC transporter 1 domain. Residue Cys524 is the site of S-palmitoyl cysteine attachment. Phosphoserine occurs at positions 549 and 660. Positions 654–831 (SAERRNSILT…EEINEEDLKE (178 aa)) are disordered R region. Phosphoserine; by PKA is present on Ser670. Ser686 carries the post-translational modification Phosphoserine. A Glycyl lysine isopeptide (Lys-Gly) (interchain with G-Cter in ubiquitin) cross-link involves residue Lys688. 2 positions are modified to phosphoserine: Ser700 and Ser712. Thr717 is subject to Phosphothreonine. Ser737, Ser753, Ser768, Ser790, Ser795, and Ser813 each carry phosphoserine. The chain crosses the membrane as a helical span at residues 859–879 (LIFVLIWCLVIFLAEVAASLV). The 297-residue stretch at 859 to 1155 (LIFVLIWCLV…AVNSSIDVDS (297 aa)) folds into the ABC transmembrane type-1 2 domain. Residues 880–918 (VLWFLGNTPPQDKGNSTYSRNNSYAVIITRTSSYYVFYI) lie on the Extracellular side of the membrane. Residues Asn894 and Asn900 are each glycosylated (N-linked (GlcNAc...) asparagine). The chain crosses the membrane as a discontinuously helical span at residues 919-939 (YVGVADTLLAMGFFRGLPLVH). The Cytoplasmic portion of the chain corresponds to 940 to 990 (TLITVSKILHHKMLHSVLQAPMSTLNTLKAGGILNRFSKDIAILDDLLPLT). The helical transmembrane segment at 991 to 1011 (IFDFIQLLLIVIGAIAVVAVL) threads the bilayer. Residues 1012–1013 (QP) lie on the Extracellular side of the membrane. The chain crosses the membrane as a helical span at residues 1014-1034 (YIFVATVPVIVAFIMLRAYFL). Residues 1035–1095 (QTSQQLKQLE…TANWFLYLST (61 aa)) lie on the Cytoplasmic side of the membrane. A helical transmembrane segment spans residues 1096–1116 (LRWFQMRIEMIFVIFFIAVTF). At 1117-1130 (ISILTTGEGEGTVG) the chain is on the extracellular side. Residues 1131–1151 (IILTLAMNIMSTLQWAVNSSI) form a helical membrane-spanning segment. The Cytoplasmic segment spans residues 1152–1481 (DVDSLMRSVS…TEEEVQDTRL (330 aa)). An ABC transporter 2 domain is found at 1211-1444 (MTVKDLTAKY…RSLFRQAISP (234 aa)). Residues Tyr1220 and 1245-1252 (GRTGSGKS) contribute to the ATP site. The tract at residues 1387-1481 (RTLKQAFADC…TEEEVQDTRL (95 aa)) is interaction with GORASP2. Cys1396 carries S-palmitoyl cysteine lipidation. 2 positions are modified to phosphoserine: Ser1445 and Ser1457. The tract at residues 1462-1481 (QPQIAALKEETEEEVQDTRL) is disordered. The span at 1471–1481 (ETEEEVQDTRL) shows a compositional bias: acidic residues. Residues 1479–1481 (TRL) carry the PDZ-binding motif.

The protein belongs to the ABC transporter superfamily. ABCC family. CFTR transporter (TC 3.A.1.202) subfamily. Monomer; does not require oligomerization for channel activity. May form oligomers in the membrane. Interacts with SLC26A3, SLC26A6 and NHERF1. Interacts with SHANK2. Interacts with MYO6. Interacts (via C-terminus) with GOPC (via PDZ domain); this promotes CFTR internalization and thereby decreases channel activity. Interacts with SLC4A7 through NHERF1. Found in a complex with MYO5B and RAB11A. Interacts with ANO1. Interacts with SLC26A8. Interacts with AHCYL1; the interaction increases CFTR activity. Interacts with CSE1L. The core-glycosylated form interacts with GORASP2 (via PDZ GRASP-type 1 domain) in respone to ER stress. Interacts with MARCHF2; the interaction leads to CFTR ubiqtuitination and degradation. Interacts with ADGRG2. In terms of processing, N-glycosylated. Phosphorylated; cAMP treatment promotes phosphorylation and activates the channel. Dephosphorylation decreases the ATPase activity (in vitro). Phosphorylation at PKA sites activates the channel. Phosphorylation at PKC sites enhances the response to phosphorylation by PKA. Phosphorylated by AMPK; this inhibits channel activity. Post-translationally, ubiquitinated, leading to its degradation in the lysosome. Deubiquitination by USP10 in early endosomes enhances its endocytic recycling to the cell membrane. Ubiquitinated by RNF185 during ER stress. Ubiquitinated by MARCHF2.

Its subcellular location is the apical cell membrane. It localises to the early endosome membrane. It is found in the cell membrane. The protein resides in the recycling endosome membrane. The protein localises to the endoplasmic reticulum membrane. Its subcellular location is the nucleus. The catalysed reaction is ATP + H2O + closed Cl(-) channel = ADP + phosphate + open Cl(-) channel.. The enzyme catalyses chloride(in) = chloride(out). It catalyses the reaction hydrogencarbonate(in) = hydrogencarbonate(out). It carries out the reaction ATP + H2O = ADP + phosphate + H(+). Epithelial ion channel that plays an important role in the regulation of epithelial ion and water transport and fluid homeostasis. Mediates the transport of chloride ions across the cell membrane. Possesses an intrinsic ATPase activity and utilizes ATP to gate its channel; the passive flow of anions through the channel is gated by cycles of ATP binding and hydrolysis by the ATP-binding domains. The ion channel is also permeable to HCO(3)(-); selectivity depends on the extracellular chloride concentration. Exerts its function also by modulating the activity of other ion channels and transporters. Contributes to the regulation of the pH and the ion content of the epithelial fluid layer. Modulates the activity of the epithelial sodium channel (ENaC) complex, in part by regulating the cell surface expression of the ENaC complex. May regulate bicarbonate secretion and salvage in epithelial cells by regulating the transporter SLC4A7. Can inhibit the chloride channel activity of ANO1. Plays a role in the chloride and bicarbonate homeostasis during sperm epididymal maturation and capacitation. The chain is Cystic fibrosis transmembrane conductance regulator from Chlorocebus aethiops (Green monkey).